Consider the following 228-residue polypeptide: PKHD-type hydroxylase xcc-b100_1388 (228 aa).

Residues 78–180 form the Fe2OG dioxygenase domain; that stretch reads RIYPPLFNRY…RVASFFWIQS (103 aa). The Fe cation site is built by His-96, Asp-98, and His-161. Arg-171 serves as a coordination point for 2-oxoglutarate.

The cofactor is Fe(2+). It depends on L-ascorbate as a cofactor.

This Xanthomonas campestris pv. campestris (strain B100) protein is PKHD-type hydroxylase xcc-b100_1388.